The following is a 49-amino-acid chain: Small integral membrane protein 27 (49 aa).

Residues 11–31 (WTYSLLLLAIVLLSWGFVIYA) form a helical membrane-spanning segment.

Its subcellular location is the membrane. This chain is Small integral membrane protein 27, found in Mus musculus (Mouse).